Here is a 334-residue protein sequence, read N- to C-terminus: Short-chain dehydrogenase/reductase (334 aa).

The NADP(+) site is built by Leu-44, Lys-68, Asp-93, Asn-120, and Lys-152. Active-site proton donor residues include Ser-176 and Tyr-205. NADP(+)-binding residues include Tyr-205, Lys-209, and Asn-239. The Lowers pKa of active site Tyr role is filled by Lys-209.

Belongs to the short-chain dehydrogenases/reductases (SDR) family.

The protein operates within mycotoxin biosynthesis. Functionally, short-chain dehydrogenase/reductase; part of the 2 gene clusters that mediate the biosynthesis of fusicoccins, diterpene glucosides that display phytohormone-like activity and function as potent activators of plasma membrane H(+)-ATPases in plants by modifying 14-3-3 proteins and cause the plant disease constriction canker. The first step in the pathway is performed by the fusicoccadiene synthase PaFS that possesses both prenyl transferase and terpene cyclase activity, converting isopentenyl diphosphate and dimethylallyl diphosphate into geranylgeranyl diphosphate (GGDP) and successively converting GGDP into fusicocca-2,10(14)-diene, a precursor for fusicoccin H. The second step is the oxidation at the C-8 position by the cytochrome P450 monooxygenase PaP450-2 to yield fusicocca-2,10(14)-diene-8-beta-ol. The cytochrome P450 monooxygenase PaP450-1 then catalyzes the hydroxylation at the C-16 position to produce fusicocca-2,10(14)-diene-8-beta,16-diol. The dioxygenase fc-dox then catalyzes the 16-oxydation of fusicocca-2,10(14)-diene-8-beta,16-diol to yield an aldehyde (8-beta-hydroxyfusicocca-1,10(14)-dien-16-al). The short-chain dehydrogenase/reductase fc-sdr catalyzes the reduction of the aldehyde to yield fusicocca-1,10(14)-diene-8-beta,16-diol. The next step is the hydroxylation at C-9 performed by the cytochrome P450 monooxygenase PaP450-3 that leads to fusicoccin H aglycon which is glycosylated to fusicoccin H by the O-glycosyltransferase PaGT. Hydroxylation at C-12 by the cytochrome P450 monooxygenase PaP450-4 leads then to the production of fusicoccin Q and is followed by methylation by the O-methyltransferase PaMT to yield fusicoccin P. Fusicoccin P is further converted to fusicoccin J via prenylation by the O-glucose prenyltransferase PaPT. Cytochrome P450 monooxygenase PaP450-5 then performs hydroxylation at C-19 to yield dideacetyl-fusicoccin A which is acetylated to 3'-O-deacetyl-fusicoccin A by the O-acetyltransferase PaAT-2. Finally, a another acetylation by the O-acetyltransferase PaAT-1 yields fusicoccin A. This is Short-chain dehydrogenase/reductase from Phomopsis amygdali (Fusicoccum amygdali).